The primary structure comprises 295 residues: Phosphoenolpyruvate phosphomutase (295 aa).

Asp58 serves as the catalytic Nucleophile. Asp58 contributes to the Mg(2+) binding site.

It belongs to the isocitrate lyase/PEP mutase superfamily. PEP mutase family. As to quaternary structure, homotetramer. Mg(2+) is required as a cofactor.

It carries out the reaction phosphoenolpyruvate + H(+) = 3-phosphonopyruvate. Its pathway is phosphorus metabolism; phosphonate biosynthesis. In terms of biological role, formation of a carbon-phosphorus bond by converting phosphoenolpyruvate (PEP) to phosphonopyruvate (P-Pyr). The polypeptide is Phosphoenolpyruvate phosphomutase (Mytilus edulis (Blue mussel)).